Reading from the N-terminus, the 131-residue chain is Small ribosomal subunit protein uS8 (131 aa).

The protein belongs to the universal ribosomal protein uS8 family. In terms of assembly, part of the 30S ribosomal subunit. Contacts proteins S5 and S12.

One of the primary rRNA binding proteins, it binds directly to 16S rRNA central domain where it helps coordinate assembly of the platform of the 30S subunit. The polypeptide is Small ribosomal subunit protein uS8 (Cupriavidus metallidurans (strain ATCC 43123 / DSM 2839 / NBRC 102507 / CH34) (Ralstonia metallidurans)).